The primary structure comprises 79 residues: Reactive oxygen species modulator 1 (79 aa).

The helical transmembrane segment at 22–44 (GFVMGCAVGMAAGALFGTFSCLR) threads the bilayer. The sufficient for antibacterial activity stretch occupies residues 42 to 60 (CLRIGMRGRELMGGIGKTM).

It belongs to the MGR2 family.

It localises to the mitochondrion inner membrane. In terms of biological role, has antibacterial activity against a variety of bacteria including S.aureus, P.aeruginosa and M.tuberculosis. Acts by inducing bacterial membrane breakage. Induces production of reactive oxygen species (ROS) which are necessary for cell proliferation. May play a role in inducing oxidative DNA damage and replicative senescence. May play a role in the coordination of mitochondrial morphology and cell proliferation. This is Reactive oxygen species modulator 1 (ROMO1) from Bos taurus (Bovine).